Here is a 443-residue protein sequence, read N- to C-terminus: Inactive polypeptide N-acetylgalactosaminyltransferase-like protein 5 (443 aa).

Residues 1–4 (MRNA) are Cytoplasmic-facing. A helical; Signal-anchor for type II membrane protein transmembrane segment spans residues 5-27 (IIRCLFYGSLTFGIWTALLFIYL). At 28–443 (HHNHVSNWQK…PELEASVNRS (416 aa)) the chain is on the lumenal side. A glycan (N-linked (GlcNAc...) asparagine) is linked at N87. Cystine bridges form between C124/C355 and C346/C422. Residues 133–243 (LPTASIVICF…RVWLEPLLHA (111 aa)) are catalytic subdomain A. Residues D174 and R204 each coordinate substrate. Residue D227 participates in Mn(2+) binding. Residue S228 participates in substrate binding. Mn(2+) is bound at residue H229. The catalytic subdomain B stretch occupies residues 301–363 (PIRSPAMSGG…PCSRVGHISK (63 aa)). W332 contacts substrate. Mn(2+) is bound at residue H360.

The protein belongs to the glycosyltransferase 2 family. GalNAc-T subfamily. Mn(2+) is required as a cofactor. In terms of tissue distribution, expressed in testis.

The protein localises to the late endosome membrane. In terms of biological role, probable inactive glycosyltransferase required during spermatid development. May participate in protein loading into the acrosomes and accumulation of ubiquitin-proteasome systems around the head-tail coupling apparatus region. The polypeptide is Inactive polypeptide N-acetylgalactosaminyltransferase-like protein 5 (GALNTL5) (Macaca fascicularis (Crab-eating macaque)).